Reading from the N-terminus, the 212-residue chain is Redox-sensing transcriptional repressor Rex (212 aa).

A DNA-binding region (H-T-H motif) is located at residues 17-56 (LYYRIFKRFNTDGIEKASSKQIADALGIDSATVRRDFSYF). 91-96 (GCGNIG) is an NAD(+) binding site.

This sequence belongs to the transcriptional regulatory Rex family. In terms of assembly, homodimer.

It localises to the cytoplasm. Its function is as follows. Modulates transcription in response to changes in cellular NADH/NAD(+) redox state. This chain is Redox-sensing transcriptional repressor Rex, found in Streptococcus agalactiae serotype III (strain NEM316).